The chain runs to 47 residues: Putative heat shock protein HSP90 (47 aa).

Arg-47 is an ATP binding site.

It belongs to the heat shock protein 90 family. As to quaternary structure, homodimer.

The protein resides in the cytoplasm. In terms of biological role, putative molecular chaperone that may promote the maturation, structural maintenance and proper regulation of specific target proteins. This chain is Putative heat shock protein HSP90, found in Populus euphratica (Euphrates poplar).